Here is a 294-residue protein sequence, read N- to C-terminus: Cytidine deaminase (294 aa).

CMP/dCMP-type deaminase domains lie at 48-168 (DEDA…FGPK) and 186-294 (LTGD…VLLA). 89–91 (NME) lines the substrate pocket. His-102 contacts Zn(2+). Residue Glu-104 is the Proton donor of the active site. Cys-129 and Cys-132 together coordinate Zn(2+).

The protein belongs to the cytidine and deoxycytidylate deaminase family. As to quaternary structure, homodimer. Zn(2+) is required as a cofactor.

The enzyme catalyses cytidine + H2O + H(+) = uridine + NH4(+). It carries out the reaction 2'-deoxycytidine + H2O + H(+) = 2'-deoxyuridine + NH4(+). Its function is as follows. This enzyme scavenges exogenous and endogenous cytidine and 2'-deoxycytidine for UMP synthesis. This Escherichia coli (strain ATCC 8739 / DSM 1576 / NBRC 3972 / NCIMB 8545 / WDCM 00012 / Crooks) protein is Cytidine deaminase.